A 520-amino-acid polypeptide reads, in one-letter code: Sodium-dependent dicarboxylate transporter SdcS (520 aa).

14 consecutive transmembrane segments (helical) span residues 30-50 (AGQLIGLILGPLLFLLTLLFF), 55-75 (LPWEGVYVLAITLWIATWWIT), 77-97 (AIPIAATSLLPIVLLPLGHIL), 104-124 (SEYGNDIIFLFLGGFILAIAM), 160-180 (SMFVSNTAAVMIMIPIGLAII), 207-227 (IGYAGTIGGLGTLIGTPPLII), 242-262 (FAKWMIVGIPTVIVLLGITWL), 298-318 (KVVQTIFVLASLLWITREFLL), 323-343 (VTSSVADGTIAIFISILLFVI), 362-382 (ELPWGVLILFGGGLALAKGIS), 399-419 (GVSPILIVIVITIFVLFLTEV), 428-448 (MILPILATLSVAVGVHPLLLM), 452-472 (AMAANCAYMLPVGTPPNAIIF), and 491-511 (LISAIIIILVVYYVMPIVLGI).

This sequence belongs to the SLC13A/DASS transporter (TC 2.A.47) family. NADC subfamily.

Its subcellular location is the cell membrane. Its function is as follows. Mediates the transport of the dicarboxylates fumarate, malate, and succinate across the cytoplasmic membrane via a Na(+)-electrochemical gradient. This is Sodium-dependent dicarboxylate transporter SdcS (sdcS) from Staphylococcus aureus (strain bovine RF122 / ET3-1).